Here is a 314-residue protein sequence, read N- to C-terminus: Olfactory receptor 5B12 (314 aa).

At 1–23 the chain is on the extracellular side; it reads MENNTEVTEFILVGLTDDPELQI. Asn3 is a glycosylation site (N-linked (GlcNAc...) asparagine). Residues 24–44 form a helical membrane-spanning segment; the sequence is PLFIVFLFIYLITLVGNLGMI. The Cytoplasmic segment spans residues 45–52; the sequence is ELILLDSC. The chain crosses the membrane as a helical span at residues 53–73; it reads LHTPMYFFLSNLSLVDFGYSS. The Extracellular segment spans residues 74–97; the sequence is AVTPKVMVGFLTGDKFILYNACAT. Cys95 and Cys187 are joined by a disulfide. Residues 98 to 118 form a helical membrane-spanning segment; the sequence is QFFFFVAFITAESFLLASMAY. Residues 119-137 are Cytoplasmic-facing; the sequence is DRYAALCKPLHYTTTMTTN. The chain crosses the membrane as a helical span at residues 138-158; that stretch reads VCACLAIGSYICGFLNASIHT. The Extracellular segment spans residues 159-194; it reads GNTFRLSFCRSNVVEHFFCDAPPLLTLSCSDNYISE. A helical membrane pass occupies residues 195 to 215; sequence MVIFFVVGFNDLFSILVILIS. At 216–235 the chain is on the cytoplasmic side; that stretch reads YLFIFITIMKMRSPEGRQKA. The chain crosses the membrane as a helical span at residues 236–256; sequence FSTCASHLTAVSIFYGTGIFM. The Extracellular segment spans residues 257–269; that stretch reads YLRPNSSHFMGTD. Asn261 carries an N-linked (GlcNAc...) asparagine glycan. A helical membrane pass occupies residues 270–290; it reads KMASVFYAIVIPMLNPLVYSL. Residues 291 to 314 lie on the Cytoplasmic side of the membrane; it reads RNKEVKSAFKKTVGKAKASIGFIF.

Belongs to the G-protein coupled receptor 1 family.

Its subcellular location is the cell membrane. Its function is as follows. Odorant receptor. This Homo sapiens (Human) protein is Olfactory receptor 5B12 (OR5B12).